The sequence spans 70 residues: Dermaseptin-PH (70 aa).

A signal peptide spans 1–22 (MDILKKSLFLILFLGVVSLSIC). A propeptide spanning residues 23–44 (EEEKRENEEEMEQDDEQSEMKR) is cleaved from the precursor. Q67 carries the post-translational modification Glutamine amide. A propeptide spanning residues 68–70 (GGQ) is cleaved from the precursor.

The protein belongs to the frog skin active peptide (FSAP) family. In terms of tissue distribution, expressed by the skin glands.

It localises to the secreted. Its subcellular location is the target cell membrane. Antimicrobial peptide which inhibits the growth of Gram-negative (MIC=16-64 uM) and Gram-positive bacteria (MIC=32 uM), and pathogenic yeast Candida albicans (MIC=16 uM). Shows a broad-spectrum of anticancer activities against several cancer cell lines. Also shows slight cytotoxicity on human dermal microvascular endothelium cells (IC(50)=4.85 uM). Induces low hemolysis against horse erythrocytes. The sequence is that of Dermaseptin-PH from Pithecopus hypochondrialis (Orange-legged leaf frog).